A 344-amino-acid chain; its full sequence is tRNA N6-adenosine threonylcarbamoyltransferase (344 aa).

Fe cation is bound by residues H111 and H115. Substrate contacts are provided by residues 134 to 138, D167, G180, and N273; that span reads LVSGG. D301 is a Fe cation binding site.

The protein belongs to the KAE1 / TsaD family. Requires Fe(2+) as cofactor.

It localises to the cytoplasm. It catalyses the reaction L-threonylcarbamoyladenylate + adenosine(37) in tRNA = N(6)-L-threonylcarbamoyladenosine(37) in tRNA + AMP + H(+). Required for the formation of a threonylcarbamoyl group on adenosine at position 37 (t(6)A37) in tRNAs that read codons beginning with adenine. Is involved in the transfer of the threonylcarbamoyl moiety of threonylcarbamoyl-AMP (TC-AMP) to the N6 group of A37, together with TsaE and TsaB. TsaD likely plays a direct catalytic role in this reaction. The sequence is that of tRNA N6-adenosine threonylcarbamoyltransferase from Cupriavidus necator (strain ATCC 17699 / DSM 428 / KCTC 22496 / NCIMB 10442 / H16 / Stanier 337) (Ralstonia eutropha).